Consider the following 251-residue polypeptide: tRNA (guanine-N(7)-)-methyltransferase (251 aa).

S-adenosyl-L-methionine-binding positions include Gly-71, 94–95, 128–129, and Leu-148; these read EL and NS. Asp-151 is an active-site residue. 226 to 228 is an S-adenosyl-L-methionine binding site; the sequence is TEE.

The protein belongs to the class I-like SAM-binding methyltransferase superfamily. TrmB family.

The protein localises to the nucleus. It carries out the reaction guanosine(46) in tRNA + S-adenosyl-L-methionine = N(7)-methylguanosine(46) in tRNA + S-adenosyl-L-homocysteine. Its pathway is tRNA modification; N(7)-methylguanine-tRNA biosynthesis. Its function is as follows. Catalyzes the formation of N(7)-methylguanine at position 46 (m7G46) in tRNA. The protein is tRNA (guanine-N(7)-)-methyltransferase of Arabidopsis thaliana (Mouse-ear cress).